Here is a 79-residue protein sequence, read N- to C-terminus: Cell division protein ZapB (79 aa).

The stretch at 4 to 78 (EVFEKLEAKV…LRALLGKMEE (75 aa)) forms a coiled coil.

It belongs to the ZapB family. As to quaternary structure, homodimer. The ends of the coiled-coil dimer bind to each other, forming polymers. Interacts with FtsZ.

The protein localises to the cytoplasm. Its function is as follows. Non-essential, abundant cell division factor that is required for proper Z-ring formation. It is recruited early to the divisome by direct interaction with FtsZ, stimulating Z-ring assembly and thereby promoting cell division earlier in the cell cycle. Its recruitment to the Z-ring requires functional FtsA or ZipA. The protein is Cell division protein ZapB of Pectobacterium carotovorum subsp. carotovorum (strain PC1).